The following is a 503-amino-acid chain: Pentatricopeptide repeat-containing protein At2g30100, chloroplastic (503 aa).

The N-terminal 50 residues, 1 to 50 (MAYAHVFASLTISTISLRRFLPRLHRNHSVKPNSRIICNLKLNYSAGKFR), are a transit peptide targeting the chloroplast. 3 PPR repeats span residues 341-375 (IGVV…GREP), 376-410 (EADL…GSQR), and 411-445 (KKKT…GLHP).

The protein belongs to the PPR family. P subfamily.

The protein localises to the plastid. It is found in the chloroplast. This chain is Pentatricopeptide repeat-containing protein At2g30100, chloroplastic, found in Arabidopsis thaliana (Mouse-ear cress).